The sequence spans 314 residues: Transmembrane protein 248 (314 aa).

Residues 21–41 form a helical membrane-spanning segment; the sequence is VVFMISVSAMAIAFLTLGYFF. Residues 78–106 form a disordered region; that stretch reads LTNDTTTPESTMTSGQARASTQSPQALED. Residues 80 to 102 show a composition bias toward polar residues; the sequence is NDTTTPESTMTSGQARASTQSPQ. The next 3 membrane-spanning stretches (helical) occupy residues 179–199, 236–258, and 270–290; these read QVVF…PVTV, FWCY…TVIV, and LMHT…YAVI.

The protein belongs to the TMEM248 family.

Its subcellular location is the membrane. This Homo sapiens (Human) protein is Transmembrane protein 248 (TMEM248).